The following is an 81-amino-acid chain: Large ribosomal subunit protein bL31 (81 aa).

The Zn(2+) site is built by C16, C18, C38, and C41.

It belongs to the bacterial ribosomal protein bL31 family. Type A subfamily. As to quaternary structure, part of the 50S ribosomal subunit. It depends on Zn(2+) as a cofactor.

Its function is as follows. Binds the 23S rRNA. In Mycobacterium marinum (strain ATCC BAA-535 / M), this protein is Large ribosomal subunit protein bL31.